We begin with the raw amino-acid sequence, 310 residues long: tRNA uridine(34) hydroxylase (310 aa).

Positions 127–225 constitute a Rhodanese domain; it reads KNQNTIVIDT…YLDEISKEEN (99 aa). Cys-185 functions as the Cysteine persulfide intermediate in the catalytic mechanism.

The protein belongs to the TrhO family.

The catalysed reaction is uridine(34) in tRNA + AH2 + O2 = 5-hydroxyuridine(34) in tRNA + A + H2O. Its function is as follows. Catalyzes oxygen-dependent 5-hydroxyuridine (ho5U) modification at position 34 in tRNAs. The chain is tRNA uridine(34) hydroxylase from Prochlorococcus marinus (strain MIT 9215).